The primary structure comprises 353 residues: Thiamine-phosphate synthase (353 aa).

Residues 1 to 128 (MELMVVEADA…ASTAAEIRYG (128 aa)) are unknown. Positions 129–353 (LYDLEVRILE…ASRTLLQTLA (225 aa)) are thiamine-phosphate synthase. Residues 185 to 189 (QYRRK) and Asn217 each bind 4-amino-2-methyl-5-(diphosphooxymethyl)pyrimidine. Asp218 and Asp237 together coordinate Mg(2+). Ser256 serves as a coordination point for 4-amino-2-methyl-5-(diphosphooxymethyl)pyrimidine. 282-284 (TKT) contacts 2-[(2R,5Z)-2-carboxy-4-methylthiazol-5(2H)-ylidene]ethyl phosphate. Residue Lys285 participates in 4-amino-2-methyl-5-(diphosphooxymethyl)pyrimidine binding. Position 312 (Gly312) interacts with 2-[(2R,5Z)-2-carboxy-4-methylthiazol-5(2H)-ylidene]ethyl phosphate.

Belongs to the thiamine-phosphate synthase family. Mg(2+) serves as cofactor.

It carries out the reaction 2-[(2R,5Z)-2-carboxy-4-methylthiazol-5(2H)-ylidene]ethyl phosphate + 4-amino-2-methyl-5-(diphosphooxymethyl)pyrimidine + 2 H(+) = thiamine phosphate + CO2 + diphosphate. It catalyses the reaction 2-(2-carboxy-4-methylthiazol-5-yl)ethyl phosphate + 4-amino-2-methyl-5-(diphosphooxymethyl)pyrimidine + 2 H(+) = thiamine phosphate + CO2 + diphosphate. The enzyme catalyses 4-methyl-5-(2-phosphooxyethyl)-thiazole + 4-amino-2-methyl-5-(diphosphooxymethyl)pyrimidine + H(+) = thiamine phosphate + diphosphate. Its pathway is cofactor biosynthesis; thiamine diphosphate biosynthesis; thiamine phosphate from 4-amino-2-methyl-5-diphosphomethylpyrimidine and 4-methyl-5-(2-phosphoethyl)-thiazole: step 1/1. In terms of biological role, condenses 4-methyl-5-(beta-hydroxyethyl)thiazole monophosphate (THZ-P) and 2-methyl-4-amino-5-hydroxymethyl pyrimidine pyrophosphate (HMP-PP) to form thiamine monophosphate (TMP). This chain is Thiamine-phosphate synthase, found in Synechococcus sp. (strain CC9311).